Consider the following 315-residue polypeptide: Ankyrin repeat domain-containing protein 54 (315 aa).

A disordered region spans residues 1–49 (MDGSSPLLAAAGSDGDRSSSEGEYTLAGGPSAGDTEKREGESPMEAAGA). 4 ANK repeats span residues 124 to 153 (HAVK…DPCA), 157 to 186 (KGRT…DPNQ), 190 to 219 (LGNT…RVDA), and 223 to 255 (AGRT…EVTQ).

The protein localises to the nucleus. The protein resides in the cytoplasm. It localises to the midbody. Its function is as follows. Plays an important role in regulating intracellular signaling events associated with erythroid terminal differentiation. The protein is Ankyrin repeat domain-containing protein 54 (ankrd54) of Danio rerio (Zebrafish).